Here is a 314-residue protein sequence, read N- to C-terminus: Tetraacyldisaccharide 4'-kinase (314 aa).

Residue 61–68 (IVGGSGKT) participates in ATP binding.

The protein belongs to the LpxK family.

It carries out the reaction a lipid A disaccharide + ATP = a lipid IVA + ADP + H(+). It participates in glycolipid biosynthesis; lipid IV(A) biosynthesis; lipid IV(A) from (3R)-3-hydroxytetradecanoyl-[acyl-carrier-protein] and UDP-N-acetyl-alpha-D-glucosamine: step 6/6. Transfers the gamma-phosphate of ATP to the 4'-position of a tetraacyldisaccharide 1-phosphate intermediate (termed DS-1-P) to form tetraacyldisaccharide 1,4'-bis-phosphate (lipid IVA). This Aliarcobacter butzleri (strain RM4018) (Arcobacter butzleri) protein is Tetraacyldisaccharide 4'-kinase.